The primary structure comprises 521 residues: Cell cycle checkpoint protein hpr-9 (521 aa).

Disordered regions lie at residues 1-20 (MQAI…TRER), 318-375 (QHEE…NRFV), and 492-521 (GTET…YESR). 2 stretches are compositionally biased toward polar residues: residues 355 to 370 (ESLS…SLPS) and 493 to 504 (TETTSKMRMSQQ).

This sequence belongs to the rad9 family. In terms of assembly, putative component of the toroidal 9-1-1 (RAD9-RAD1-HUS1) complex, composed of hpr-9, mrt-2 and hus-1.

In terms of biological role, may be a component of the 9-1-1 cell-cycle checkpoint response complex that plays a major role in DNA repair. This is Cell cycle checkpoint protein hpr-9 from Caenorhabditis elegans.